We begin with the raw amino-acid sequence, 177 residues long: 3-hydroxydecanoyl-[acyl-carrier-protein] dehydratase (177 aa).

The active site involves H76.

Belongs to the thioester dehydratase family. FabA subfamily. Homodimer.

The protein localises to the cytoplasm. The enzyme catalyses a (3R)-hydroxyacyl-[ACP] = a (2E)-enoyl-[ACP] + H2O. The catalysed reaction is (3R)-hydroxydecanoyl-[ACP] = (2E)-decenoyl-[ACP] + H2O. It carries out the reaction (2E)-decenoyl-[ACP] = (3Z)-decenoyl-[ACP]. Its pathway is lipid metabolism; fatty acid biosynthesis. Its function is as follows. Necessary for the introduction of cis unsaturation into fatty acids. Catalyzes the dehydration of (3R)-3-hydroxydecanoyl-ACP to E-(2)-decenoyl-ACP and then its isomerization to Z-(3)-decenoyl-ACP. Can catalyze the dehydratase reaction for beta-hydroxyacyl-ACPs with saturated chain lengths up to 16:0, being most active on intermediate chain length. This is 3-hydroxydecanoyl-[acyl-carrier-protein] dehydratase from Mannheimia succiniciproducens (strain KCTC 0769BP / MBEL55E).